Consider the following 757-residue polypeptide: Chloride anion exchanger (757 aa).

Residues 1-71 (MIEAIGNQYV…SWLPAYKIKE (71 aa)) lie on the Cytoplasmic side of the membrane. A helical transmembrane segment spans residues 72-92 (WLLSDIVSGISTGLVAVLQGL). Residue Ala-93 is a topological domain, extracellular. Residues 94 to 114 (FALLVNIPPAYGLYAAFFPVI) form a helical membrane-spanning segment. The Cytoplasmic segment spans residues 115–124 (TYFFLGTSRH). Residues 125–145 (ISVGPFPVLSMMVGVVVTRVV) form a helical membrane-spanning segment. Over 146-176 (SDPNASSELSSSSTENDSFIEEKVMVAASVT) the chain is Extracellular. Residues Asn-149 and Asn-161 are each glycosylated (N-linked (GlcNAc...) asparagine). Residues 177–197 (VLSGIIQLLLGVLQVGFVVIY) form a helical membrane-spanning segment. The Cytoplasmic segment spans residues 198-201 (LSES). A helical membrane pass occupies residues 202 to 222 (LISGFTTAAAIHVLVSQLKFM). The Extracellular segment spans residues 223–250 (LQLPVPAYSDPFSIFKVLESVFTQIQKT). A helical transmembrane segment spans residues 251–271 (NIADLVTSVIILVVVFVFKEI). Over 272-278 (NQRYRSK) the chain is Cytoplasmic. The chain crosses the membrane as a helical span at residues 279-299 (LPVPIPIELIMTVIATGVSYG). The Extracellular portion of the chain corresponds to 300-335 (CNFEDRFGVAVVGNMSLGFQPPITPSVEVFQDTIGD). The helical transmembrane segment at 336–356 (SFGIAIVGFAVAFSVASVYSL) threads the bilayer. Residues 357 to 367 (KYDYPIDGNQE) are Cytoplasmic-facing. The chain crosses the membrane as a helical span at residues 368-388 (LIALGVSNIFTGAFKGFAGST). The Extracellular portion of the chain corresponds to 389–404 (ALSRSGVQESTGGKTQ). Residues 405 to 425 (VAGLLSAVIVLIVIVAIGFLL) traverse the membrane as a helical segment. At 426-462 (QPLQKSVLAALALGNLKGMLMQFAEIGRLWKKDKYDC) the chain is on the cytoplasmic side. A helical transmembrane segment spans residues 463-483 (LIWIMTFIFAIVLGLGLGLAA). Residues 484–757 (SVAFQLLTIV…ECQVPVETKF (274 aa)) lie on the Extracellular side of the membrane. The 196-residue stretch at 518–713 (NYAEVYEPEG…LTIHDAILHI (196 aa)) folds into the STAS domain. The short motif at 754–757 (ETKF) is the PDZ-binding element.

This sequence belongs to the SLC26A/SulP transporter (TC 2.A.53) family. As to quaternary structure, interacts with PDZK1. Interacts with CFTR, SLC26A6 and NHERF1. Interacts (via PDZ-binding motif) with NHERF4 (via the third PDZ domain). This interaction leads to decreased expression of SLC26A3 on the cell membrane resulting in its reduced exchanger activity. N-glycosylation is required for efficient cell surface expression, and protection from proteolytic degradation. Expressed in spermatogenic cells. Expressed at high levels in cecum and colon and at lower levels in small intestine.

Its subcellular location is the apical cell membrane. It localises to the membrane. It is found in the cell membrane. It catalyses the reaction hydrogencarbonate(in) + 2 chloride(out) = hydrogencarbonate(out) + 2 chloride(in). Its function is as follows. Mediates chloride-bicarbonate exchange with a chloride bicarbonate stoichiometry of 2:1 in the intestinal epithelia. Plays a role in the chloride and bicarbonate homeostasis during sperm epididymal maturation and capacitation. This Mus musculus (Mouse) protein is Chloride anion exchanger (Slc26a3).